The following is a 155-amino-acid chain: Medium/long-chain acyl-CoA thioesterase YigI (155 aa).

Belongs to the YigI thioesterase family.

The protein localises to the cytoplasm. The catalysed reaction is a fatty acyl-CoA + H2O = a fatty acid + CoA + H(+). The enzyme catalyses a medium-chain fatty acyl-CoA + H2O = a medium-chain fatty acid + CoA + H(+). It carries out the reaction a long-chain fatty acyl-CoA + H2O = a long-chain fatty acid + CoA + H(+). Functionally, displays thioesterase activity against medium- to long-chain acyl-CoA substrates. Is involved in the thioesterase-dependent beta-oxidation pathway of (9Z,11E)-octadecadienoate (conjugated linoleic acid or CLA), along with TesB and FadM. This is Medium/long-chain acyl-CoA thioesterase YigI (yigI) from Salmonella typhimurium (strain LT2 / SGSC1412 / ATCC 700720).